A 333-amino-acid chain; its full sequence is NAC domain-containing protein 26 (333 aa).

Residues 14–173 (LPPGFRFHPT…DWAVCRIFHK (160 aa)) form the NAC domain. Residues 114–179 (IGMKKTLVFY…IFHKSSGIKK (66 aa)) mediate DNA binding. Residues 143 to 162 (ADASPPQPPPPPSSAEPPRQ) form a disordered region. The segment covering 147 to 157 (PPQPPPPPSSA) has biased composition (pro residues).

As to quaternary structure, forms homodimers. Forms heterodimers with NAC20. Forms heterodimers with NAC23. As to expression, expressed in developing seeds.

It is found in the nucleus. Functionally, transcription factor that acts redundantly with NAC20 to regulate the expression of genes involved in the biosynthesis of starch and storage proteins in grain. Directly binds to the promoters of starch synthase 1 (SS1), pullulanase (PUL), glutelin A1 (GLUA1), glutelins B4 and B5 (GLUB4 and GLUB5), alpha-globulin and 16 kDa prolamin, and activates their expression. Possesses transactivation activity in yeast. The protein is NAC domain-containing protein 26 of Oryza sativa subsp. indica (Rice).